The following is a 971-amino-acid chain: Kinesin-like protein KIN-6 (971 aa).

2 disordered regions span residues Met-1–Ala-44 and Thr-93–Glu-121. The span at Ala-29–Pro-39 shows a compositional bias: low complexity. Residues Ser-76–Ile-460 form the Kinesin motor domain. Gly-202–Thr-209 serves as a coordination point for ATP. Over residues Arg-700–Ser-709 the composition is skewed to basic and acidic residues. Disordered regions lie at residues Arg-700 to Met-856 and Lys-872 to Pro-917. A compositionally biased stretch (polar residues) spans Gln-768–Thr-783. The span at Val-785–Asn-797 shows a compositional bias: basic and acidic residues. A compositionally biased stretch (polar residues) spans Glu-809–Ala-827. The span at Arg-831–Arg-842 shows a compositional bias: basic and acidic residues. Over residues Lys-903–Leu-915 the composition is skewed to basic residues.

This sequence belongs to the TRAFAC class myosin-kinesin ATPase superfamily. Kinesin family. KIN-6 subfamily.

The sequence is that of Kinesin-like protein KIN-6 from Arabidopsis thaliana (Mouse-ear cress).